We begin with the raw amino-acid sequence, 390 residues long: L-seryl-tRNA(Sec) selenium transferase (390 aa).

At K225 the chain carries N6-(pyridoxal phosphate)lysine.

The protein belongs to the SelA family. Pyridoxal 5'-phosphate serves as cofactor.

The protein localises to the cytoplasm. The enzyme catalyses L-seryl-tRNA(Sec) + selenophosphate + H(+) = L-selenocysteinyl-tRNA(Sec) + phosphate. It functions in the pathway aminoacyl-tRNA biosynthesis; selenocysteinyl-tRNA(Sec) biosynthesis; selenocysteinyl-tRNA(Sec) from L-seryl-tRNA(Sec) (bacterial route): step 1/1. Functionally, converts seryl-tRNA(Sec) to selenocysteinyl-tRNA(Sec) required for selenoprotein biosynthesis. This is L-seryl-tRNA(Sec) selenium transferase from Helicobacter pylori (strain J99 / ATCC 700824) (Campylobacter pylori J99).